The sequence spans 303 residues: Albumin b-32 (303 aa).

Low complexity predominate over residues 112-137; sequence ATPTSSATTPGGSASAAGTRTSSATR. The interval 112–175 is disordered; it reads ATPTSSATTP…GGGGADADAD (64 aa). A compositionally biased stretch (basic and acidic residues) spans 146-156; that stretch reads ARDDQGRQRPG.

This sequence belongs to the ribosome-inactivating protein family. Type 1 RIP subfamily. Monomer. In terms of tissue distribution, endosperm.

Its subcellular location is the cytoplasm. It carries out the reaction Endohydrolysis of the N-glycosidic bond at one specific adenosine on the 28S rRNA.. Functionally, a possible regulatory factor for the synthesis of zeins, the major group of storage proteins. In Zea mays (Maize), this protein is Albumin b-32 (O6).